A 658-amino-acid polypeptide reads, in one-letter code: Structure-specific endonuclease subunit SLX1 (658 aa).

In terms of domain architecture, GIY-YIG spans 12–92; it reads PFYACYFLRS…AKPHLSRHLK (81 aa). 4 disordered regions span residues 29-52, 239-269, 288-328, and 594-658; these read YIGSTPAPPRRKRQHNGHLTQGAY, GVAEHPVKKRQTSSRQKPHTEETSAWPETLP, PIPQ…NGVD, and TTSR…IDLT. Basic and acidic residues-rich tracts occupy residues 308 to 324 and 627 to 640; these read KLSDKARPSALEDHDAE and SKIDGDGAGKDTKK. The span at 641 to 652 shows a compositional bias: polar residues; it reads NTTQKAKSNETS.

The protein belongs to the SLX1 family. As to quaternary structure, forms a heterodimer with SLX4. It depends on a divalent metal cation as a cofactor.

The protein resides in the nucleus. Catalytic subunit of the SLX1-SLX4 structure-specific endonuclease that resolves DNA secondary structures generated during DNA repair and recombination. Has endonuclease activity towards branched DNA substrates, introducing single-strand cuts in duplex DNA close to junctions with ss-DNA. The sequence is that of Structure-specific endonuclease subunit SLX1 from Mycosarcoma maydis (Corn smut fungus).